The primary structure comprises 292 residues: 1D-myo-inositol 2-acetamido-2-deoxy-alpha-D-glucopyranoside deacetylase (292 aa).

Positions 12, 15, and 147 each coordinate Zn(2+).

This sequence belongs to the MshB deacetylase family. The cofactor is Zn(2+).

It carries out the reaction 1D-myo-inositol 2-acetamido-2-deoxy-alpha-D-glucopyranoside + H2O = 1D-myo-inositol 2-amino-2-deoxy-alpha-D-glucopyranoside + acetate. Its function is as follows. Catalyzes the deacetylation of 1D-myo-inositol 2-acetamido-2-deoxy-alpha-D-glucopyranoside (GlcNAc-Ins) in the mycothiol biosynthesis pathway. In Rhodococcus opacus (strain B4), this protein is 1D-myo-inositol 2-acetamido-2-deoxy-alpha-D-glucopyranoside deacetylase.